The chain runs to 268 residues: Undecaprenyl-diphosphatase (268 aa).

8 consecutive transmembrane segments (helical) span residues 9 to 29, 47 to 67, 83 to 103, 107 to 127, 144 to 164, 184 to 204, 218 to 238, and 246 to 266; these read VILGVVEGVTEFLPVSSTGHL, FDVLIQLGAILAILALYFAKL, FIIGVLVAFLPAAVIGAAAGS, LFLFNPWVVCFSLIVGGAVLL, FPVLMYFYIGCAQCVAMIPGV, AAEFSFFLAIPTMVGAFVYDL, IVAVGFVVSFITAIIVVKTFL, and FQLFAWWRVVVGTLGLIALAM.

Belongs to the UppP family.

It localises to the cell inner membrane. The enzyme catalyses di-trans,octa-cis-undecaprenyl diphosphate + H2O = di-trans,octa-cis-undecaprenyl phosphate + phosphate + H(+). In terms of biological role, catalyzes the dephosphorylation of undecaprenyl diphosphate (UPP). Confers resistance to bacitracin. The polypeptide is Undecaprenyl-diphosphatase (Rhodopseudomonas palustris (strain HaA2)).